The sequence spans 388 residues: Succinate--CoA ligase [ADP-forming] subunit beta (388 aa).

The region spanning K9–Q244 is the ATP-grasp domain. Residues K46, G53–G55, E99, T102, and E107 contribute to the ATP site. Mg(2+)-binding residues include N199 and D213. Residues N264 and G321–V323 each bind substrate.

It belongs to the succinate/malate CoA ligase beta subunit family. In terms of assembly, heterotetramer of two alpha and two beta subunits. Mg(2+) serves as cofactor.

The enzyme catalyses succinate + ATP + CoA = succinyl-CoA + ADP + phosphate. It catalyses the reaction GTP + succinate + CoA = succinyl-CoA + GDP + phosphate. It participates in carbohydrate metabolism; tricarboxylic acid cycle; succinate from succinyl-CoA (ligase route): step 1/1. In terms of biological role, succinyl-CoA synthetase functions in the citric acid cycle (TCA), coupling the hydrolysis of succinyl-CoA to the synthesis of either ATP or GTP and thus represents the only step of substrate-level phosphorylation in the TCA. The beta subunit provides nucleotide specificity of the enzyme and binds the substrate succinate, while the binding sites for coenzyme A and phosphate are found in the alpha subunit. This is Succinate--CoA ligase [ADP-forming] subunit beta from Salmonella arizonae (strain ATCC BAA-731 / CDC346-86 / RSK2980).